The sequence spans 228 residues: D-lyxose/D-mannose isomerase (228 aa).

Mn(2+) is bound by residues histidine 103, histidine 105, glutamate 110, and histidine 171.

The protein belongs to the D-lyxose ketol-isomerase family. In terms of assembly, homodimer. Requires Mn(2+) as cofactor.

It catalyses the reaction D-lyxose = D-xylulose. It carries out the reaction D-mannose = D-fructose. In terms of biological role, sugar isomerase that catalyzes the reversible isomerization of D-lyxose to D-xylulose, and D-mannose to D-fructose. Shows optimum activity using D-lyxose as substrate, but can also effectively catalyze the isomerization between D-fructose and D-mannose. Shows lower activity with L-gulose, D-talose and L-ribose. This is D-lyxose/D-mannose isomerase from Serratia proteamaculans.